The following is a 429-amino-acid chain: Enolase (429 aa).

Residue glutamine 169 coordinates (2R)-2-phosphoglycerate. Glutamate 211 (proton donor) is an active-site residue. Positions 248, 289, and 316 each coordinate Mg(2+). (2R)-2-phosphoglycerate is bound by residues lysine 341, arginine 370, serine 371, and lysine 392. Catalysis depends on lysine 341, which acts as the Proton acceptor.

Belongs to the enolase family. The cofactor is Mg(2+).

Its subcellular location is the cytoplasm. The protein resides in the secreted. It localises to the cell surface. The catalysed reaction is (2R)-2-phosphoglycerate = phosphoenolpyruvate + H2O. The protein operates within carbohydrate degradation; glycolysis; pyruvate from D-glyceraldehyde 3-phosphate: step 4/5. Its function is as follows. Catalyzes the reversible conversion of 2-phosphoglycerate (2-PG) into phosphoenolpyruvate (PEP). It is essential for the degradation of carbohydrates via glycolysis. The polypeptide is Enolase (Anaplasma phagocytophilum (strain HZ)).